Here is a 500-residue protein sequence, read N- to C-terminus: NAD(P)H-quinone oxidoreductase chain 4, chloroplastic (500 aa).

A run of 15 helical transmembrane segments spans residues 4-24 (LPWL…IPLF), 31-51 (IIRW…TYTF), 87-107 (IGPI…AWPV), 111-131 (PRLF…LFAS), 134-154 (ILLF…LISM), 167-187 (FILY…SMGL), 207-227 (VVLE…KLPI), 242-262 (HYST…YGLI), 274-294 (SLFS…AALT), 305-325 (IAYS…SMAD), 330-350 (GAIL…FLAG), 358-378 (TLFL…STMF), 386-406 (LALP…GIIT), 416-436 (IVIA…LLSM), and 462-482 (IFIS…PDLV).

Belongs to the complex I subunit 4 family.

The protein localises to the plastid. The protein resides in the chloroplast thylakoid membrane. It carries out the reaction a plastoquinone + NADH + (n+1) H(+)(in) = a plastoquinol + NAD(+) + n H(+)(out). The enzyme catalyses a plastoquinone + NADPH + (n+1) H(+)(in) = a plastoquinol + NADP(+) + n H(+)(out). The sequence is that of NAD(P)H-quinone oxidoreductase chain 4, chloroplastic from Cycas taitungensis (Prince sago).